The chain runs to 261 residues: Esterase citA (261 aa).

Residues Ser122, Asp207, and His235 each act as charge relay system in the active site.

This sequence belongs to the LovG family.

The protein operates within mycotoxin biosynthesis. Its function is as follows. Non-reducing polyketide synthase; part of the gene cluster that mediates the biosynthesis of the mycotoxin citrinin, a hepato-nephrotoxic compound to humans due to inhibition of respiration complex III. The pathway begins with the synthesis of a keto-aldehyde intermediate by the citrinin PKS (pksCT also named citS) from successive condensations of 4 malonyl-CoA units, presumably with a simple acetyl-CoA starter unit. Release of the keto-aldehyde intermediate is consistent with the presence of the C-terminal reductive release domain. CitA collaborates with citS by catalyzing the hydrolysis of ACP-bound acyl intermediates to free the ACP from stalled intermediates. CitB then catalyzes the oxidation of the C-12 methyl of the ketone intermediate to an alcohol intermediate which is further oxidized by the oxidoreductase citC to produce a bisaldehyde intermediate. The fourth catalytic step is catalyzed by the citD aldehyde dehydrogenase. The final transformation is the reduction of C-3 by citE to provide the chemically stable citrinin nucleus. CitE appears highly selective for its substrate as its presence in any context other than a full complement of citS and citA-D does not result in observable new compounds. The polypeptide is Esterase citA (Monascus ruber (Mold)).